A 495-amino-acid chain; its full sequence is Glutamate--tRNA ligase (495 aa).

Residues 12 to 22 (PSPTGHLHIGN) carry the 'HIGH' region motif. Positions 259 to 263 (KLSKR) match the 'KMSKS' region motif. Lys262 contributes to the ATP binding site.

It belongs to the class-I aminoacyl-tRNA synthetase family. Glutamate--tRNA ligase type 1 subfamily. Monomer.

It localises to the cytoplasm. It catalyses the reaction tRNA(Glu) + L-glutamate + ATP = L-glutamyl-tRNA(Glu) + AMP + diphosphate. Its function is as follows. Catalyzes the attachment of glutamate to tRNA(Glu) in a two-step reaction: glutamate is first activated by ATP to form Glu-AMP and then transferred to the acceptor end of tRNA(Glu). The polypeptide is Glutamate--tRNA ligase (Ligilactobacillus salivarius (strain UCC118) (Lactobacillus salivarius)).